The primary structure comprises 140 residues: Nucleoside diphosphate kinase (140 aa).

Residues lysine 11, phenylalanine 59, arginine 87, threonine 93, arginine 104, and asparagine 114 each contribute to the ATP site. Catalysis depends on histidine 117, which acts as the Pros-phosphohistidine intermediate.

The protein belongs to the NDK family. As to quaternary structure, homotetramer. Mg(2+) is required as a cofactor.

It localises to the cytoplasm. It catalyses the reaction a 2'-deoxyribonucleoside 5'-diphosphate + ATP = a 2'-deoxyribonucleoside 5'-triphosphate + ADP. The catalysed reaction is a ribonucleoside 5'-diphosphate + ATP = a ribonucleoside 5'-triphosphate + ADP. In terms of biological role, major role in the synthesis of nucleoside triphosphates other than ATP. The ATP gamma phosphate is transferred to the NDP beta phosphate via a ping-pong mechanism, using a phosphorylated active-site intermediate. The chain is Nucleoside diphosphate kinase from Methylobacterium radiotolerans (strain ATCC 27329 / DSM 1819 / JCM 2831 / NBRC 15690 / NCIMB 10815 / 0-1).